Consider the following 91-residue polypeptide: Small ribosomal subunit protein bS18 (91 aa).

This sequence belongs to the bacterial ribosomal protein bS18 family. In terms of assembly, part of the 30S ribosomal subunit. Forms a tight heterodimer with protein bS6.

Functionally, binds as a heterodimer with protein bS6 to the central domain of the 16S rRNA, where it helps stabilize the platform of the 30S subunit. The protein is Small ribosomal subunit protein bS18 of Thiobacillus denitrificans (strain ATCC 25259 / T1).